A 187-amino-acid polypeptide reads, in one-letter code: Elongation factor P (187 aa).

This sequence belongs to the elongation factor P family.

The protein resides in the cytoplasm. It participates in protein biosynthesis; polypeptide chain elongation. Its function is as follows. Involved in peptide bond synthesis. Stimulates efficient translation and peptide-bond synthesis on native or reconstituted 70S ribosomes in vitro. Probably functions indirectly by altering the affinity of the ribosome for aminoacyl-tRNA, thus increasing their reactivity as acceptors for peptidyl transferase. The sequence is that of Elongation factor P from Syntrophus aciditrophicus (strain SB).